A 439-amino-acid polypeptide reads, in one-letter code: FAD-linked oxidoreductase phmC (439 aa).

The N-terminal stretch at 1-19 is a signal peptide; that stretch reads MLSSILLTIFCAFLSSTGA. N29 and N84 each carry an N-linked (GlcNAc...) asparagine glycan. Positions 89-272 constitute an FAD-binding PCMH-type domain; it reads QGSVPSYYIQ…LSTTTRVEPK (184 aa). N285 and N300 each carry an N-linked (GlcNAc...) asparagine glycan.

Belongs to the oxygen-dependent FAD-linked oxidoreductase family. FAD serves as cofactor.

The protein operates within mycotoxin biosynthesis. In terms of biological role, FAD-linked oxidoreductase; part of the gene cluster that mediates the biosynthesis of the mycotoxins phomacins, leucine-derived cytochalasans with potent actin polymerization-inhibitory activities and monocot-specific antigerminative activities. The first step in the pathway is catalyzed by the hybrid PKS-NRPS phmA, assisted by the enoyl reductase phmE, that are responsible for fusion of the leucine precursor and the polyketide backbone to produce a 2-pyrrolidone intermediate. The polyketide synthase module (PKS) of phmA is responsible for the synthesis of the polyketide backbone and the downstream nonribosomal peptide synthetase (NRPS) amidates the carboxyl end of the polyketide with the leucine precursor. Because phmA lacks a designated enoylreductase (ER) domain, the required activity is provided the enoyl reductase phmE. Reduction by the hydrolyase phmG, followed by dehydration and intra-molecular Diels-Alder cyclization by the Diels-Alderase phmD then yield the required isoindolone-fused macrocycle. A number of oxidative steps catalyzed by the tailoring cytochrome P450 monooxygenase phmB, the FAD-linked oxidoreductase phmC and the short-chain dehydrogenase/reductase phmF, are further required to afford the final products, phomacin D and phomacin E. This is FAD-linked oxidoreductase phmC from Phaeosphaeria nodorum (strain SN15 / ATCC MYA-4574 / FGSC 10173) (Glume blotch fungus).